The primary structure comprises 411 residues: NADH-quinone oxidoreductase subunit D (411 aa).

This sequence belongs to the complex I 49 kDa subunit family. In terms of assembly, NDH-1 is composed of 14 different subunits. Subunits NuoB, C, D, E, F, and G constitute the peripheral sector of the complex.

Its subcellular location is the cell inner membrane. The catalysed reaction is a quinone + NADH + 5 H(+)(in) = a quinol + NAD(+) + 4 H(+)(out). In terms of biological role, NDH-1 shuttles electrons from NADH, via FMN and iron-sulfur (Fe-S) centers, to quinones in the respiratory chain. The immediate electron acceptor for the enzyme in this species is believed to be ubiquinone. Couples the redox reaction to proton translocation (for every two electrons transferred, four hydrogen ions are translocated across the cytoplasmic membrane), and thus conserves the redox energy in a proton gradient. This chain is NADH-quinone oxidoreductase subunit D, found in Phenylobacterium zucineum (strain HLK1).